A 687-amino-acid polypeptide reads, in one-letter code: Protein-glutamine gamma-glutamyltransferase 2 (687 aa).

Residue A2 is modified to N-acetylalanine. A Phosphoserine modification is found at S60. Cystine bridges form between C230-C370 and C370-C371. Catalysis depends on residues C277, H335, and D358. Residues N398, D400, E437, E447, and E452 each coordinate Ca(2+). At K468 the chain carries N6-acetyllysine. 476–483 serves as a coordination point for GTP; that stretch reads RIRVGQSM. E539 provides a ligand contact to Ca(2+). 580–583 is a binding site for GTP; that stretch reads RDLY. Q633 is covalently cross-linked (Isoglutamyl lysine isopeptide (Gln-Lys) (interchain with K-?)).

It belongs to the transglutaminase superfamily. Transglutaminase family. Monomer. Interacts with phospholipase C; promoting alpha-1 adrenergic receptor signaling. Interacts with PLCD1. As to quaternary structure, homooligomer. Requires Ca(2+) as cofactor. Post-translationally, disulfide bond formation inactivates the calcium-dependent acyltransferase activity. Cys-370 can form disulfide bonds with both Cys-230 and Cys-371: formation of a disulfide bond between Cys-230 and Cys-370 facilitates formation of the disulfide between Cys-370 and Cys-371, which promotes inactivation of the acyltransferase activity. May also form interchain disulfids between Cys-230 and Cys-370. Ca(2+) protects against disulfide bond formation and inactivation. In terms of processing, auto-transglutaminated: Forms covalent cross-links mediated by transglutaminase between Gln-633 and the epsilon-amino group of a lysine residue of itself or HMGB1, forming homopolymers and heteropolymers, respectively. S-nitrosylated, leading to inactivation of the acyltransferase activity.

The protein resides in the cytoplasm. It is found in the cytosol. Its subcellular location is the nucleus. It localises to the chromosome. The protein localises to the secreted. The protein resides in the extracellular space. It is found in the extracellular matrix. Its subcellular location is the cell membrane. It localises to the mitochondrion. The protein localises to the perinuclear region. It catalyses the reaction L-glutaminyl-[protein] + L-lysyl-[protein] = [protein]-L-lysyl-N(6)-5-L-glutamyl-[protein] + NH4(+). The enzyme catalyses L-glutaminyl-[protein] + serotonin = 5-serotonyl-L-glutamyl-[protein] + NH4(+). The catalysed reaction is L-glutaminyl-[protein] + dopamine = 5-dopaminyl-L-glutamyl-[protein] + NH4(+). It carries out the reaction L-glutaminyl-[protein] + histamine = 5-histaminyl-L-glutamyl-[protein] + NH4(+). It catalyses the reaction L-glutaminyl-[protein] + (R)-noradrenaline = 5-(R)-noradrenalinyl-L-glutamyl-[protein] + NH4(+). The enzyme catalyses L-glutaminyl-[protein] + H2O = L-glutamyl-[protein] + NH4(+). With respect to regulation, acyltransferase activity is regulated by the binding of GTP and Ca(2+): inactivated by GTP, which stabilizes its closed structure, thereby obstructing the accessibility of substrates to the active sites. In contrast, Ca(2+) acts as a cofactor by inducing conformational change to the active open form. In absence of Ca(2+), Mg(2+) may bind Ca(2+)-binding sites, promoting GTP-binding and subsequent inhibition of the acyltransferase activity. Extracellularly reduced and activated by CLIC3. Specifically inhibited by compound VA4 ((S)-Benzyl (6-Acrylamido-1-(4-((5-(dimethylamino)naphthalen-1-yl)sulfonyl)piperazin-1-yl)-1-oxohexan-2-yl)carbamate), which specifically abolishes both the transamidation and GTP-binding activities. Functionally, calcium-dependent acyltransferase that catalyzes the formation of covalent bonds between peptide-bound glutamine and various primary amines, such as gamma-amino group of peptide-bound lysine, or mono- and polyamines, thereby producing cross-linked or aminated proteins, respectively. Involved in many biological processes, such as bone development, angiogenesis, wound healing, cellular differentiation, chromatin modification and apoptosis. Acts as a protein-glutamine gamma-glutamyltransferase by mediating the cross-linking of proteins, such as ACO2, HSPB6, FN1, HMGB1, RAP1GDS1, SLC25A4/ANT1, SPP1 and WDR54. Under physiological conditions, the protein cross-linking activity is inhibited by GTP; inhibition is relieved by Ca(2+) in response to various stresses. When secreted, catalyzes cross-linking of proteins of the extracellular matrix, such as FN1 and SPP1 resulting in the formation of scaffolds. Plays a key role during apoptosis, both by (1) promoting the cross-linking of cytoskeletal proteins resulting in condensation of the cytoplasm, and by (2) mediating cross-linking proteins of the extracellular matrix, resulting in the irreversible formation of scaffolds that stabilize the integrity of the dying cells before their clearance by phagocytosis, thereby preventing the leakage of harmful intracellular components. In addition to protein cross-linking, can use different monoamine substrates to catalyze a vast array of protein post-translational modifications: mediates aminylation of serotonin, dopamine, noradrenaline or histamine into glutamine residues of target proteins to generate protein serotonylation, dopaminylation, noradrenalinylation or histaminylation, respectively. Mediates protein serotonylation of small GTPases during activation and aggregation of platelets, leading to constitutive activation of these GTPases. Plays a key role in chromatin organization by mediating serotonylation and dopaminylation of histone H3. Catalyzes serotonylation of 'Gln-5' of histone H3 (H3Q5ser) during serotonergic neuron differentiation, thereby facilitating transcription. Acts as a mediator of neurotransmission-independent role of nuclear dopamine in ventral tegmental area (VTA) neurons: catalyzes dopaminylation of 'Gln-5' of histone H3 (H3Q5dop), thereby regulating relapse-related transcriptional plasticity in the reward system. Regulates vein remodeling by mediating serotonylation and subsequent inactivation of ATP2A2/SERCA2. Also acts as a protein deamidase by mediating the side chain deamidation of specific glutamine residues of proteins to glutamate. Catalyzes specific deamidation of protein gliadin, a component of wheat gluten in the diet. May also act as an isopeptidase cleaving the previously formed cross-links. Also able to participate in signaling pathways independently of its acyltransferase activity: acts as a signal transducer in alpha-1 adrenergic receptor-mediated stimulation of phospholipase C-delta (PLCD) activity and is required for coupling alpha-1 adrenergic agonists to the stimulation of phosphoinositide lipid metabolism. Its function is as follows. Has cytotoxic activity: is able to induce apoptosis independently of its acyltransferase activity. In Homo sapiens (Human), this protein is Protein-glutamine gamma-glutamyltransferase 2.